A 190-amino-acid chain; its full sequence is Segregation and condensation protein B (190 aa).

The protein belongs to the ScpB family. Homodimer. Homodimerization may be required to stabilize the binding of ScpA to the Smc head domains. Component of a cohesin-like complex composed of ScpA, ScpB and the Smc homodimer, in which ScpA and ScpB bind to the head domain of Smc. The presence of the three proteins is required for the association of the complex with DNA.

The protein resides in the cytoplasm. Participates in chromosomal partition during cell division. May act via the formation of a condensin-like complex containing Smc and ScpA that pull DNA away from mid-cell into both cell halves. This chain is Segregation and condensation protein B, found in Bacillus cereus (strain B4264).